The following is a 359-amino-acid chain: MALITLRQLLDHAAERLQGYGVPAFNINNMEQGLAILAAARACDAPVIASRGARSYAGDIMLRHIVEALAEMYPQIPICLHQDHGNNEATCLSAIRHGFTSVMMDGSLQADMKTVASYDYNVDITRRVTDAAHWVGASVEGELGVLGSLEKGEAEAEDGSGAEGKLDHSQMLTDPDQAVEFVQATRVDALAIAMGTSHGAYKFSRKPDGEILAMRVIEEIHARLPATHLVMHGSSSVAARLQDLINAHGADMPQTYGVPVEEIERGIRHGVRKVNIDTDCRMALTGQFRKVAMESPKEFDARKFMIPAMKEMEALVRDRFERFGTAGNASKITVIPMDDMAKRYASGALDPAVATAKAA.

Ser-50 serves as a coordination point for D-glyceraldehyde 3-phosphate. Asp-83 functions as the Proton donor in the catalytic mechanism. Zn(2+)-binding residues include His-84, Asp-105, Glu-142, and His-198. Residue Gly-199 participates in dihydroxyacetone phosphate binding. His-232 contacts Zn(2+). Residues 233-235 and 275-278 each bind dihydroxyacetone phosphate; these read GSS and NIDT.

The protein belongs to the class II fructose-bisphosphate aldolase family. Homodimer. The cofactor is Zn(2+).

It carries out the reaction beta-D-fructose 1,6-bisphosphate = D-glyceraldehyde 3-phosphate + dihydroxyacetone phosphate. Its pathway is carbohydrate biosynthesis; Calvin cycle. It participates in carbohydrate degradation; glycolysis; D-glyceraldehyde 3-phosphate and glycerone phosphate from D-glucose: step 4/4. Its function is as follows. Catalyzes the aldol condensation of dihydroxyacetone phosphate (DHAP or glycerone-phosphate) with glyceraldehyde 3-phosphate (G3P) to form fructose 1,6-bisphosphate (FBP) in gluconeogenesis and the reverse reaction in glycolysis. The chain is Fructose-bisphosphate aldolase 1 (cfxA) from Cereibacter sphaeroides (Rhodobacter sphaeroides).